Consider the following 114-residue polypeptide: Flagellar hook-basal body complex protein FliE (114 aa).

This sequence belongs to the FliE family.

It is found in the bacterial flagellum basal body. The chain is Flagellar hook-basal body complex protein FliE from Burkholderia vietnamiensis (strain G4 / LMG 22486) (Burkholderia cepacia (strain R1808)).